The primary structure comprises 80 residues: Omega-conotoxin-like PuIA (80 aa).

The first 22 residues, 1 to 22 (MKLTCVMIVAVLFLTAWTFVTA), serve as a signal peptide directing secretion. A propeptide spanning residues 23–50 (DSIRALEDLFAKAPDEMENSGASPLNER) is cleaved from the precursor. 3 disulfide bridges follow: C52–C70, C59–C74, and C69–C78.

Belongs to the conotoxin O1 superfamily. As to expression, expressed by the venom duct.

The protein localises to the secreted. Its function is as follows. Omega-conotoxins act at presynaptic membranes, they bind and block voltage-gated calcium channels (Cav). This chain is Omega-conotoxin-like PuIA, found in Conus pulicarius (Flea-bitten cone).